Reading from the N-terminus, the 291-residue chain is Ribosomal protein L11 methyltransferase (291 aa).

4 residues coordinate S-adenosyl-L-methionine: Thr136, Gly159, Asp181, and Asn228.

Belongs to the methyltransferase superfamily. PrmA family.

Its subcellular location is the cytoplasm. It catalyses the reaction L-lysyl-[protein] + 3 S-adenosyl-L-methionine = N(6),N(6),N(6)-trimethyl-L-lysyl-[protein] + 3 S-adenosyl-L-homocysteine + 3 H(+). In terms of biological role, methylates ribosomal protein L11. In Rhizobium meliloti (strain 1021) (Ensifer meliloti), this protein is Ribosomal protein L11 methyltransferase.